Reading from the N-terminus, the 68-residue chain is uncharacterized protein (68 aa).

The HMA domain maps to 2–67; the sequence is KTITLNIKGI…VIEDAGFDAT (66 aa). Positions 13 and 16 each coordinate a metal cation.

This is an uncharacterized protein from Haemophilus influenzae (strain ATCC 51907 / DSM 11121 / KW20 / Rd).